The following is a 456-amino-acid chain: Adenylyltransferase and sulfurtransferase uba4 (456 aa).

ATP-binding positions include Gly101, Asp122, 129–133 (SNLHR), Lys146, and 161–162 (DH). Positions 210 and 213 each coordinate Zn(2+). Cys227 (glycyl thioester intermediate; for adenylyltransferase activity) is an active-site residue. The Zn(2+) site is built by Cys300 and Cys303. Residues 350 to 454 (KEKEHLLIDV…WKEQVDGSWP (105 aa)) form the Rhodanese domain. The Cysteine persulfide intermediate; for sulfurtransferase activity role is filled by Cys409.

The protein in the N-terminal section; belongs to the HesA/MoeB/ThiF family. UBA4 subfamily. Zn(2+) serves as cofactor.

Its subcellular location is the cytoplasm. It localises to the cytosol. It carries out the reaction [molybdopterin-synthase sulfur-carrier protein]-C-terminal Gly-Gly + ATP + H(+) = [molybdopterin-synthase sulfur-carrier protein]-C-terminal Gly-Gly-AMP + diphosphate. The enzyme catalyses [molybdopterin-synthase sulfur-carrier protein]-C-terminal Gly-Gly-AMP + S-sulfanyl-L-cysteinyl-[cysteine desulfurase] + AH2 = [molybdopterin-synthase sulfur-carrier protein]-C-terminal-Gly-aminoethanethioate + L-cysteinyl-[cysteine desulfurase] + A + AMP + 2 H(+). The protein operates within tRNA modification; 5-methoxycarbonylmethyl-2-thiouridine-tRNA biosynthesis. Plays a central role in 2-thiolation of mcm(5)S(2)U at tRNA wobble positions of cytosolic tRNA(Lys), tRNA(Glu) and tRNA(Gln). Also essential during biosynthesis of the molybdenum cofactor. Acts by mediating the C-terminal thiocarboxylation of sulfur carriers urm1 and mocs2a. Its N-terminus first activates urm1 and mocs2a as acyl-adenylates (-COAMP), then the persulfide sulfur on the catalytic cysteine is transferred to urm1 and mocs2a to form thiocarboxylation (-COSH) of their C-terminus. The reaction probably involves hydrogen sulfide that is generated from the persulfide intermediate and that acts as a nucleophile towards urm1 and mocs2a. Subsequently, a transient disulfide bond is formed. Does not use thiosulfate as sulfur donor; nfs1 probably acting as a sulfur donor for thiocarboxylation reactions. In Sclerotinia sclerotiorum (strain ATCC 18683 / 1980 / Ss-1) (White mold), this protein is Adenylyltransferase and sulfurtransferase uba4.